The chain runs to 357 residues: Protein-arginine kinase (357 aa).

In terms of domain architecture, Phosphagen kinase C-terminal spans 24–255 (IVISTRLRIA…RQIIEQERVA (232 aa)). ATP is bound by residues 27 to 31 (STRLR), His92, Arg126, 177 to 181 (RASVM), and 208 to 213 (RGIYGE). Positions 338 to 343 (RDERRA) match the RDXXRA motif of the pArg binding pocket involved in allosteric regulation motif.

It belongs to the ATP:guanido phosphotransferase family.

It carries out the reaction L-arginyl-[protein] + ATP = N(omega)-phospho-L-arginyl-[protein] + ADP + H(+). With respect to regulation, appears to be allosterically activated by the binding of pArg-containing polypeptides to the pArg-binding pocket localized in the C-terminal domain of McsB. In terms of biological role, catalyzes the specific phosphorylation of arginine residues in proteins. The protein is Protein-arginine kinase of Brevibacillus brevis (strain 47 / JCM 6285 / NBRC 100599).